The chain runs to 177 residues: MSRIGKKPVQVPAGITASVDGQKVTAKGPKGELFFVANDEISVALEDNAIVVKPVNDSKDARSKWGMSRTMIENILKGVKDGYERKLEINGVGYRASLQGKNLQLALGFSHDVVYEPPQGITIAVPKPTEIVVSGINKQQVGQVAAEIREYRGPEPYKGKGVKYAEERIVRKEGKKK.

Belongs to the universal ribosomal protein uL6 family. Part of the 50S ribosomal subunit.

This protein binds to the 23S rRNA, and is important in its secondary structure. It is located near the subunit interface in the base of the L7/L12 stalk, and near the tRNA binding site of the peptidyltransferase center. The sequence is that of Large ribosomal subunit protein uL6 from Allorhizobium ampelinum (strain ATCC BAA-846 / DSM 112012 / S4) (Agrobacterium vitis (strain S4)).